Reading from the N-terminus, the 246-residue chain is Probable septum site-determining protein MinC (246 aa).

It belongs to the MinC family. As to quaternary structure, interacts with MinD and FtsZ.

Functionally, cell division inhibitor that blocks the formation of polar Z ring septums. Rapidly oscillates between the poles of the cell to destabilize FtsZ filaments that have formed before they mature into polar Z rings. Prevents FtsZ polymerization. This chain is Probable septum site-determining protein MinC, found in Lachnospira eligens (strain ATCC 27750 / DSM 3376 / VPI C15-48 / C15-B4) (Eubacterium eligens).